Reading from the N-terminus, the 159-residue chain is RNA pyrophosphohydrolase (159 aa).

One can recognise a Nudix hydrolase domain in the interval 6–149; sequence GFRPNVGIIL…KREVYRRALK (144 aa). The Nudix box motif lies at 38-59; it reads GGINPDETPEDALYRELNEEVG.

It belongs to the Nudix hydrolase family. RppH subfamily. The cofactor is a divalent metal cation.

Functionally, accelerates the degradation of transcripts by removing pyrophosphate from the 5'-end of triphosphorylated RNA, leading to a more labile monophosphorylated state that can stimulate subsequent ribonuclease cleavage. The polypeptide is RNA pyrophosphohydrolase (Pseudomonas fluorescens (strain ATCC BAA-477 / NRRL B-23932 / Pf-5)).